A 161-amino-acid polypeptide reads, in one-letter code: Nucleotide-binding protein GM21_0633 (161 aa).

The protein belongs to the YajQ family.

In terms of biological role, nucleotide-binding protein. This Geobacter sp. (strain M21) protein is Nucleotide-binding protein GM21_0633.